A 473-amino-acid chain; its full sequence is Phosphatidylserine synthase 1 (473 aa).

An N-acetylalanine modification is found at Ala2. The Cytoplasmic segment spans residues 2-35; it reads ASCVGSRTLSKDDVNYRMHFRMINEQQVEDITID. The helical transmembrane segment at 36-56 threads the bilayer; sequence FFYRPHTITLLSFTIISLMYF. The Lumenal portion of the chain corresponds to 57–72; the sequence is AFTRDDSVPEDNIWRG. A helical transmembrane segment spans residues 73–93; the sequence is ILSVIFFFLIISVLAFPNGPF. Residues 94–102 lie on the Cytoplasmic side of the membrane; it reads TRPHPALWR. Residues 103–123 traverse the membrane as a helical segment; that stretch reads MVFGLSVLYFLFLVFLLFLNF. Over 124-186 the chain is Lumenal; it reads EQVKSLMYWL…AMKALLIRSY (63 aa). A helical membrane pass occupies residues 187–207; that stretch reads GLCWTISITWELTELFFMHLL. Over 208–216 the chain is Cytoplasmic; sequence PNFAECWWD. Residues 217-237 form a helical membrane-spanning segment; it reads QVILDILLCNGGGIWLGMVVC. Over 238 to 286 the chain is Lumenal; sequence RFLEMRTYHWASFKDIHTTTGKIKRAVLQFTPASWTYVRWFDPKSSFQR. A helical membrane pass occupies residues 287-307; it reads VAGIYLFMIIWQLTELNTFFL. Residues 308 to 319 lie on the Cytoplasmic side of the membrane; it reads KHIFVFQASHPL. The chain crosses the membrane as a helical span at residues 320–342; the sequence is SWGRILFIGCITAPTVRQYYAYL. Residues 343 to 355 are Lumenal-facing; the sequence is TDTQCKRVGTQCW. A helical transmembrane segment spans residues 356–376; it reads VFGVIGFLEAIVCIKFGQDLF. Topologically, residues 377-383 are cytoplasmic; the sequence is SKTQILY. A helical membrane pass occupies residues 384-404; it reads VMLWLLCVAFTTFLCLYGMVW. The Lumenal segment spans residues 405-473; the sequence is YAEHYGHREK…SKVTNGVGKK (69 aa). 4 positions are modified to phosphoserine: Ser417, Ser425, Ser442, and Ser454. A disordered region spans residues 428-473; it reads ISWHHGKGSKGSEDSPPKHSSNHESHSSRRRNRHSKSKVTNGVGKK. Residues 437-454 show a composition bias toward basic and acidic residues; it reads KGSEDSPPKHSSNHESHS. Residues 455–464 show a composition bias toward basic residues; it reads SRRRNRHSKS.

This sequence belongs to the phosphatidyl serine synthase family. Expressed in kidney, testis, lung, skeletal muscle, liver brain, heart and spleen with highest expression in testis, liver, heart and brain.

It localises to the endoplasmic reticulum membrane. The catalysed reaction is a 1,2-diacyl-sn-glycero-3-phosphoethanolamine + L-serine = a 1,2-diacyl-sn-glycero-3-phospho-L-serine + ethanolamine. It catalyses the reaction a 1,2-diacyl-sn-glycero-3-phosphocholine + L-serine = a 1,2-diacyl-sn-glycero-3-phospho-L-serine + choline. It participates in phospholipid metabolism; phosphatidylserine biosynthesis. Its activity is regulated as follows. Potently inhibited by choline in the mitochondria-associated membrane (MAM). Very little inhibition by choline in the endoplasmic reticulum (ER) per se. In terms of biological role, catalyzes a base-exchange reaction in which the polar head group of phosphatidylethanolamine (PE) or phosphatidylcholine (PC) is replaced by L-serine. Catalyzes mainly the conversion of phosphatidylcholine. Also converts, in vitro and to a lesser extent, phosphatidylethanolamine. The polypeptide is Phosphatidylserine synthase 1 (Ptdss1) (Mus musculus (Mouse)).